A 375-amino-acid polypeptide reads, in one-letter code: Histidine biosynthesis bifunctional protein HisB (375 aa).

Residues 1-168 (MTPILFVDRD…GIAHELADAP (168 aa)) are histidinol-phosphatase. The active-site Nucleophile is the aspartate 8. 3 residues coordinate Mg(2+): aspartate 8, aspartate 10, and aspartate 128. Aspartate 10 serves as the catalytic Proton donor. Residues 169–375 (RRAVVQRNTK…TALPSTKGAL (207 aa)) are imidazoleglycerol-phosphate dehydratase.

This sequence in the N-terminal section; belongs to the histidinol-phosphatase family. It in the C-terminal section; belongs to the imidazoleglycerol-phosphate dehydratase family. Mg(2+) serves as cofactor.

The protein resides in the cytoplasm. It carries out the reaction D-erythro-1-(imidazol-4-yl)glycerol 3-phosphate = 3-(imidazol-4-yl)-2-oxopropyl phosphate + H2O. The enzyme catalyses L-histidinol phosphate + H2O = L-histidinol + phosphate. It participates in amino-acid biosynthesis; L-histidine biosynthesis; L-histidine from 5-phospho-alpha-D-ribose 1-diphosphate: step 6/9. The protein operates within amino-acid biosynthesis; L-histidine biosynthesis; L-histidine from 5-phospho-alpha-D-ribose 1-diphosphate: step 8/9. This chain is Histidine biosynthesis bifunctional protein HisB, found in Xanthomonas campestris pv. campestris (strain 8004).